The sequence spans 504 residues: Lysine--tRNA ligase (504 aa).

The Mg(2+) site is built by Glu-411 and Glu-418.

It belongs to the class-II aminoacyl-tRNA synthetase family. As to quaternary structure, homodimer. Requires Mg(2+) as cofactor.

It localises to the cytoplasm. It catalyses the reaction tRNA(Lys) + L-lysine + ATP = L-lysyl-tRNA(Lys) + AMP + diphosphate. The polypeptide is Lysine--tRNA ligase (Clostridium botulinum (strain Loch Maree / Type A3)).